The primary structure comprises 425 residues: Tol-Pal system protein TolB (425 aa).

An N-terminal signal peptide occupies residues 1-22 (MRNFLYCTGVLLLLWMSTSSQA).

It belongs to the TolB family. In terms of assembly, the Tol-Pal system is composed of five core proteins: the inner membrane proteins TolA, TolQ and TolR, the periplasmic protein TolB and the outer membrane protein Pal. They form a network linking the inner and outer membranes and the peptidoglycan layer.

The protein resides in the periplasm. Functionally, part of the Tol-Pal system, which plays a role in outer membrane invagination during cell division and is important for maintaining outer membrane integrity. This chain is Tol-Pal system protein TolB, found in Nitrosomonas europaea (strain ATCC 19718 / CIP 103999 / KCTC 2705 / NBRC 14298).